A 318-amino-acid polypeptide reads, in one-letter code: Aspartate carbamoyltransferase catalytic subunit (318 aa).

Residues R62 and T63 each contribute to the carbamoyl phosphate site. K90 contributes to the L-aspartate binding site. Carbamoyl phosphate contacts are provided by R112, H140, and Q143. L-aspartate-binding residues include R173 and R227. Positions 268 and 269 each coordinate carbamoyl phosphate.

The protein belongs to the aspartate/ornithine carbamoyltransferase superfamily. ATCase family. Heterododecamer (2C3:3R2) of six catalytic PyrB chains organized as two trimers (C3), and six regulatory PyrI chains organized as three dimers (R2).

It catalyses the reaction carbamoyl phosphate + L-aspartate = N-carbamoyl-L-aspartate + phosphate + H(+). It participates in pyrimidine metabolism; UMP biosynthesis via de novo pathway; (S)-dihydroorotate from bicarbonate: step 2/3. Functionally, catalyzes the condensation of carbamoyl phosphate and aspartate to form carbamoyl aspartate and inorganic phosphate, the committed step in the de novo pyrimidine nucleotide biosynthesis pathway. This is Aspartate carbamoyltransferase catalytic subunit from Desulfotalea psychrophila (strain LSv54 / DSM 12343).